A 2167-amino-acid polypeptide reads, in one-letter code: Glutamate synthase 1 [NADH], chloroplastic (2167 aa).

The interval 1-31 (MSAAQGMAYKLRTDAAPTGAGRRARRSHSSV) is disordered. A chloroplast-targeting transit peptide spans 1–36 (MSAAQGMAYKLRTDAAPTGAGRRARRSHSSVAAPYR). The Nucleophile role is filled by Cys-100. The Glutamine amidotransferase type-2 domain occupies 100–504 (CGVGFVAELS…PGMMLLVDFE (405 aa)). The tract at residues 1022–1042 (KSNTGEGGEQPSRMEPLANGS) is disordered. 1192–1249 (LAETHQTLVANGLRGRAILQTDGQLKTGKDVAVACLLGAEEFGFSTAPLITLGCIMMR) contacts FMN. Residues Cys-1245, Cys-1251, and Cys-1256 each contribute to the [3Fe-4S] cluster site. 1956 to 1970 (GGGDTGTDCIGTSIR) provides a ligand contact to NAD(+).

It belongs to the glutamate synthase family. As to quaternary structure, monomer. Requires [3Fe-4S] cluster as cofactor. FAD serves as cofactor. The cofactor is FMN. As to expression, highly expressed in roots.

The protein localises to the plastid. It localises to the chloroplast. It carries out the reaction 2 L-glutamate + NAD(+) = L-glutamine + 2-oxoglutarate + NADH + H(+). The protein operates within amino-acid biosynthesis; L-glutamate biosynthesis via GLT pathway; L-glutamate from 2-oxoglutarate and L-glutamine (NAD(+) route): step 1/1. It participates in energy metabolism; nitrogen metabolism. Functionally, involved in glutamate biosynthesis and plays a major role in the primary ammonium ions assimilation in seedling roots. May be involved in the reutilization of glutamine in developing organs. Plays a role in the development of tillers. This Oryza sativa subsp. japonica (Rice) protein is Glutamate synthase 1 [NADH], chloroplastic.